A 325-amino-acid chain; its full sequence is TNFAIP3-interacting protein 3 (325 aa).

Disordered regions lie at residues 1 to 30 (MAHF…STRK) and 84 to 129 (RFLS…RLNE). The span at 17 to 28 (STEHKECAEPST) shows a compositional bias: basic and acidic residues. Positions 27-265 (STRKNLMNSL…LEKQLKQMYC (239 aa)) form a coiled coil. Residues 190-248 (HEEMRTEMEVLKQQVQIYEEDFKKERSDRERLNQEKEELQQINETSQSQLNRLNSQIKA) form a ubiquitin-binding domain (UBD) region.

As to quaternary structure, interacts with TNFAIP3. Interacts with polyubiquitin. Highly expressed in lung, lymph node, thymus and fetal liver. Expressed at lower levels in bone marrow, brain, kidney, spleen, leukocytes and tonsils. Could be detected in heart, salivary gland, adrenal gland, pancreas, ovary and fetal brain. High levels detected in liver, colon, small intestine, muscle, stomach, testis, placenta, thyroid, uterus, prostate, skin and PBL.

Binds to zinc finger protein TNFAIP3 and inhibits NF-kappa-B activation induced by tumor necrosis factor, Toll-like receptor 4 (TLR4), interleukin-1 and 12-O-tetradecanoylphorbol-13-acetate. Overexpression inhibits NF-kappa-B-dependent gene expression in response to lipopolysaccharide at a level downstream of TRAF6 and upstream of IKBKB. NF-kappa-B inhibition is independent of TNFAIP3 binding. This is TNFAIP3-interacting protein 3 from Homo sapiens (Human).